A 202-amino-acid polypeptide reads, in one-letter code: MTSTQSVAVYATLILAIFCFNDIHCDPIAEARAAAFGEREARSAGEWKQFDVNGEKVEVNEQENREIIRQAGGDGVEGSVMVIDHAKGLIIWSIPRAGECYLIGGVDKQLPDAQELLHYFRSAQGSADGEGVQSALDYVKAEDRPVTDLNLLAPEVREACQGKSVYWLEKSSGDNNEPEKRRWCVYAYVRIRGVLVRYRRCW.

The signal sequence occupies residues 1 to 25 (MTSTQSVAVYATLILAIFCFNDIHC). Positions 26-181 (DPIAEARAAA…SGDNNEPEKR (156 aa)) are excised as a propeptide. The region spanning 73–168 (GDGVEGSVMV…ACQGKSVYWL (96 aa)) is the BRICHOS domain. 2 disulfide bridges follow: Cys-100-Cys-160 and Cys-184-Cys-201.

In terms of biological role, has antimicrobial activity against the Gram-negative bacteria E.coli and P.mirabilis, the Gram-positive bacterium L.monocytogenes and the yeast C.albicans. This Arenicola marina (Lugworm) protein is Arenicin-2.